Here is a 152-residue protein sequence, read N- to C-terminus: Deoxyuridine 5'-triphosphate nucleotidohydrolase (152 aa).

Residues 71–73 (RSG), asparagine 84, 88–90 (LID), and methionine 98 each bind substrate.

The protein belongs to the dUTPase family. Mg(2+) serves as cofactor.

It catalyses the reaction dUTP + H2O = dUMP + diphosphate + H(+). It functions in the pathway pyrimidine metabolism; dUMP biosynthesis; dUMP from dCTP (dUTP route): step 2/2. This enzyme is involved in nucleotide metabolism: it produces dUMP, the immediate precursor of thymidine nucleotides and it decreases the intracellular concentration of dUTP so that uracil cannot be incorporated into DNA. This is Deoxyuridine 5'-triphosphate nucleotidohydrolase from Shewanella sp. (strain ANA-3).